Consider the following 148-residue polypeptide: Cystatin-D (148 aa).

Residues 1–33 (MASLLSPSMPVLAAVALTLTLAVIPEASTNAEA) form the signal peptide. Residues 36 to 148 (VVLGGVEPAD…SMTNFNCYNF (113 aa)) enclose the Cystatin kininogen-type domain. 2 disulfides stabilise this stretch: cysteine 101-cysteine 111 and cysteine 125-cysteine 145.

The protein belongs to the cystatin family. In cartilage, expressed mainly in mature chondrocytes including prehypertrophic and hypertrophic cells (at protein level). Expressed exclusively in cartilage.

It is found in the cytoplasm. It localises to the cytosol. Functionally, may play a role in the last steps of the chondrocyte differentiation pathway as an inducer of maturation. Induces chondrocyte calcification during endochondral ossification by playing a role in the transcriptional inhibition of ENPP1, a generator of pyrophosphate which inhibits calcification. Possibly impairs the binding of a transcription factor to the ENPP1 promoter. Unlike other cystatins, does not have thiol protease inhibitor activity. The polypeptide is Cystatin-D (Mus musculus (Mouse)).